Reading from the N-terminus, the 115-residue chain is Large ribosomal subunit protein bL19 (115 aa).

Belongs to the bacterial ribosomal protein bL19 family.

Its function is as follows. This protein is located at the 30S-50S ribosomal subunit interface and may play a role in the structure and function of the aminoacyl-tRNA binding site. In Desulfovibrio desulfuricans (strain ATCC 27774 / DSM 6949 / MB), this protein is Large ribosomal subunit protein bL19.